Reading from the N-terminus, the 156-residue chain is Deoxyuridine 5'-triphosphate nucleotidohydrolase (156 aa).

It belongs to the dCTP deaminase family. Archaeal dUTPase subfamily. Homotrimer.

It carries out the reaction dUTP + H2O = dUMP + diphosphate + H(+). It functions in the pathway pyrimidine metabolism; dUMP biosynthesis; dUMP from dCTP (dUTP route): step 2/2. Functionally, this enzyme is involved in nucleotide metabolism: it produces dUMP, the immediate precursor of thymidine nucleotides and it decreases the intracellular concentration of dUTP so that uracil cannot be incorporated into DNA. The protein is Deoxyuridine 5'-triphosphate nucleotidohydrolase of Methanocaldococcus jannaschii (strain ATCC 43067 / DSM 2661 / JAL-1 / JCM 10045 / NBRC 100440) (Methanococcus jannaschii).